The following is a 392-amino-acid chain: MTNMIRQFLRQEAAGGLILIFAAVVALFMANSPLQGFYQSFLDVPVSVKIASLDISKPLLLWINDGLMAIFFLVVGLEVKRELMEGSLAGRDKAIFPAIAALGGMLAPALIYLLFNGADEVTRQGWAIPAATDIAFALGVMALLGNRVPTSLKVFLLALAIIDDLGVIIIIALFYTHEVSLQALGMAAAAIALLGYMNWRGVGKTSAYLLVGLVLWVCILKSGVHATLAGVIVGFMIPLHTQDKRSPSESLEHGLHPWVAYLILPLFAFANAGVSLQGVSISGLTSLLPLGIASGLFIGKPLGIFLFSWLAVKLGVAKLPDAINFKQIFAVSVLCGIGFTMSIFIASLAFDGADIALTTYSKLGILLGSTTAAVVGYSLLRLALPAKRNITH.

11 consecutive transmembrane segments (helical) span residues 14-34 (AGGL…NSPL), 59-79 (LLLW…GLEV), 95-115 (IFPA…YLLF), 125-145 (GWAI…ALLG), 154-174 (VFLL…IALF), 179-199 (VSLQ…YMNW), 213-233 (LVLW…GVIV), 254-274 (GLHP…NAGV), 287-307 (LLPL…IFLF), 328-348 (IFAV…IASL), and 363-383 (LGIL…LRLA).

It belongs to the NhaA Na(+)/H(+) (TC 2.A.33) antiporter family.

Its subcellular location is the cell inner membrane. The catalysed reaction is Na(+)(in) + 2 H(+)(out) = Na(+)(out) + 2 H(+)(in). Its function is as follows. Na(+)/H(+) antiporter that extrudes sodium in exchange for external protons. This is Na(+)/H(+) antiporter NhaA from Yersinia enterocolitica serotype O:8 / biotype 1B (strain NCTC 13174 / 8081).